Here is a 273-residue protein sequence, read N- to C-terminus: Cell division protein ZipA (273 aa).

Residue M1 is a topological domain, periplasmic. A helical membrane pass occupies residues 2 to 22 (DIGLREWLIVIGIIVIAGILF). Over 23 to 273 (DGWRRMRGGK…ERRQMTIKQR (251 aa)) the chain is Cytoplasmic. Residues 61–127 (VVNREHEPSL…DLQERPQKEQ (67 aa)) are disordered.

This sequence belongs to the ZipA family. In terms of assembly, interacts with FtsZ via their C-terminal domains.

The protein localises to the cell inner membrane. In terms of biological role, essential cell division protein that stabilizes the FtsZ protofilaments by cross-linking them and that serves as a cytoplasmic membrane anchor for the Z ring. Also required for the recruitment to the septal ring of downstream cell division proteins. This Stutzerimonas stutzeri (strain A1501) (Pseudomonas stutzeri) protein is Cell division protein ZipA.